Here is a 499-residue protein sequence, read N- to C-terminus: Cobyric acid synthase (499 aa).

One can recognise a GATase cobBQ-type domain in the interval 266 to 449 (RLEIAVVRLP…LHGLFDNHLW (184 aa)). Catalysis depends on Cys344, which acts as the Nucleophile. The active site involves His441.

Belongs to the CobB/CobQ family. CobQ subfamily.

It functions in the pathway cofactor biosynthesis; adenosylcobalamin biosynthesis. Catalyzes amidations at positions B, D, E, and G on adenosylcobyrinic A,C-diamide. NH(2) groups are provided by glutamine, and one molecule of ATP is hydrogenolyzed for each amidation. This Synechococcus sp. (strain JA-2-3B'a(2-13)) (Cyanobacteria bacterium Yellowstone B-Prime) protein is Cobyric acid synthase.